The sequence spans 734 residues: DNA replication licensing factor MCM5 (734 aa).

Ser-2 bears the N-acetylserine mark. Ser-315 bears the Phosphoserine mark. The MCM domain maps to 331-537 (VYEVISKSIA…RDVMLAKHVI (207 aa)). Arg-371 is a binding site for ADP. 2 positions are modified to N6-acetyllysine: Lys-392 and Lys-396. Ser-605 carries the post-translational modification Phosphoserine. An N6-acetyllysine modification is found at Lys-696.

This sequence belongs to the MCM family. Component of the MCM2-7 complex. The complex forms a toroidal hexameric ring with the proposed subunit order MCM2-MCM6-MCM4-MCM7-MCM3-MCM5. Component of the CMG helicase complex, a hexameric ring of related MCM2-7 subunits stabilized by CDC45 and the tetrameric GINS complex. Interacts with ANKRD17. Interacts with MCMBP. Interacts with TONSL; the interaction is direct.

Its subcellular location is the nucleus. The protein localises to the chromosome. The enzyme catalyses ATP + H2O = ADP + phosphate + H(+). Functionally, acts as a component of the MCM2-7 complex (MCM complex) which is the replicative helicase essential for 'once per cell cycle' DNA replication initiation and elongation in eukaryotic cells. Core component of CDC45-MCM-GINS (CMG) helicase, the molecular machine that unwinds template DNA during replication, and around which the replisome is built. The active ATPase sites in the MCM2-7 ring are formed through the interaction surfaces of two neighboring subunits such that a critical structure of a conserved arginine finger motif is provided in trans relative to the ATP-binding site of the Walker A box of the adjacent subunit. The six ATPase active sites, however, are likely to contribute differentially to the complex helicase activity. The polypeptide is DNA replication licensing factor MCM5 (MCM5) (Homo sapiens (Human)).